A 1181-amino-acid chain; its full sequence is WD repeat-containing protein 35 (1181 aa).

WD repeat units follow at residues 12-51, 69-108, 113-152, 154-193, and 502-539; these read PNNVKLKCISWNKDQGFIACGGEDGLLKVLRLETQTDDSK, GHSGAVQVVTWNEQYQKLTTSDQNGLIIVWMLYKGSWYEE, RNKSVVRSMSWNADGQKICIVYEDGAVIVGSVDGNRIWGK, LKGIQLCHVTWSADSKILLFGMANGEIHIYDNQGNFIMKM, and GTRDPICAITASDKTLIVGRESGVIQRYSFPNVALIQK.

Component of the IFT complex A (IFT-A) complex. IFT-A complex is divided into a core subcomplex composed of IFT122:IFT140:WDR19 which is associated with TULP3 and a peripheral subcomplex composed of IFT43:WDR35:TTC21B. Interacts directy with IFT122, ITF43 and TTC21B. Interacts with IFT43. Interacts with CFAP61.

It localises to the cytoplasm. The protein resides in the cytoskeleton. The protein localises to the microtubule organizing center. It is found in the centrosome. Its subcellular location is the cilium axoneme. It localises to the cilium basal body. In terms of biological role, as a component of the IFT complex A (IFT-A), a complex required for retrograde ciliary transport and entry into cilia of G protein-coupled receptors (GPCRs), it is involved in ciliogenesis and ciliary protein trafficking. May promote CASP3 activation and TNF-stimulated apoptosis. This chain is WD repeat-containing protein 35, found in Mus musculus (Mouse).